The chain runs to 368 residues: Branched-chain-amino-acid aminotransferase (368 aa).

Arginine 101 provides a ligand contact to pyridoxal 5'-phosphate. N6-(pyridoxal phosphate)lysine is present on lysine 204. Residues tyrosine 209 and 271–272 contribute to the pyridoxal 5'-phosphate site; that span reads IT. Residue lysine 299 forms an Isoglutamyl lysine isopeptide (Lys-Gln) (interchain with Q-Cter in protein Pup) linkage. Threonine 314 serves as a coordination point for pyridoxal 5'-phosphate.

This sequence belongs to the class-IV pyridoxal-phosphate-dependent aminotransferase family. Homodimer. Pyridoxal 5'-phosphate is required as a cofactor.

The enzyme catalyses L-isoleucine + 2-oxoglutarate = (S)-3-methyl-2-oxopentanoate + L-glutamate. The catalysed reaction is L-valine + 2-oxoglutarate = 3-methyl-2-oxobutanoate + L-glutamate. It catalyses the reaction L-leucine + 2-oxoglutarate = 4-methyl-2-oxopentanoate + L-glutamate. It functions in the pathway amino-acid biosynthesis; L-isoleucine biosynthesis; L-isoleucine from 2-oxobutanoate: step 4/4. The protein operates within amino-acid biosynthesis; L-leucine biosynthesis; L-leucine from 3-methyl-2-oxobutanoate: step 4/4. Its pathway is amino-acid biosynthesis; L-valine biosynthesis; L-valine from pyruvate: step 4/4. Inhibited by ammonium sulfate at millimolar concentrations and by O-benzylhydroxylamine (Obe). Functionally, catalyzes the reversible transfers of an amino group from glutamate to the alpha-ketoacid of the respective amino acid in the final step in the biosynthesis of branchedchain amino acids. The amino acids can be ranked in the following order with respect to their efficiency as amino donor: Leu &gt; Ile &gt; Val. The protein is Branched-chain-amino-acid aminotransferase (ilvE) of Mycolicibacterium smegmatis (strain ATCC 700084 / mc(2)155) (Mycobacterium smegmatis).